Consider the following 439-residue polypeptide: Glutamine synthetase (439 aa).

The 82-residue stretch at 12-93 (SKIKFVQLVF…VYGFIYKDNK (82 aa)) folds into the GS beta-grasp domain. The 341-residue stretch at 99–439 (PRGILKRALE…EWELERYFFL (341 aa)) folds into the GS catalytic domain. Mg(2+)-binding residues include glutamate 122 and glutamate 124. Glutamate 172 provides a ligand contact to ATP. Mg(2+) is bound by residues glutamate 177 and glutamate 184. Glycine 229 serves as a coordination point for L-glutamate. A Mg(2+)-binding site is contributed by histidine 233. Residues 235–237 (HIS) and serine 237 contribute to the ATP site. Arginine 283, glutamate 289, and arginine 301 together coordinate L-glutamate. Residues arginine 301, arginine 306, and lysine 313 each contribute to the ATP site. Position 318 (glutamate 318) interacts with Mg(2+). Residue arginine 320 coordinates L-glutamate.

The protein belongs to the glutamine synthetase family. As to quaternary structure, oligomer of 12 subunits arranged in the form of two hexagons. It depends on Mg(2+) as a cofactor.

Its subcellular location is the cytoplasm. The catalysed reaction is L-glutamate + NH4(+) + ATP = L-glutamine + ADP + phosphate + H(+). Its function is as follows. Probably involved in nitrogen metabolism via ammonium assimilation. Catalyzes the ATP-dependent biosynthesis of glutamine from glutamate and ammonia. The sequence is that of Glutamine synthetase from Pyrococcus furiosus (strain ATCC 43587 / DSM 3638 / JCM 8422 / Vc1).